The following is a 144-amino-acid chain: Bacilliredoxin BC_2157 (144 aa).

It belongs to the bacilliredoxin family.

The polypeptide is Bacilliredoxin BC_2157 (Bacillus cereus (strain ATCC 14579 / DSM 31 / CCUG 7414 / JCM 2152 / NBRC 15305 / NCIMB 9373 / NCTC 2599 / NRRL B-3711)).